The chain runs to 444 residues: N-succinylarginine dihydrolase (444 aa).

Substrate contacts are provided by residues 19 to 28, asparagine 110, and 137 to 138; these read AGLSFGNVAS and HR. The active site involves glutamate 174. Position 214 (arginine 214) interacts with substrate. Histidine 250 is a catalytic residue. Residues aspartate 252 and asparagine 362 each contribute to the substrate site. The Nucleophile role is filled by cysteine 368.

It belongs to the succinylarginine dihydrolase family. In terms of assembly, homodimer.

It catalyses the reaction N(2)-succinyl-L-arginine + 2 H2O + 2 H(+) = N(2)-succinyl-L-ornithine + 2 NH4(+) + CO2. The protein operates within amino-acid degradation; L-arginine degradation via AST pathway; L-glutamate and succinate from L-arginine: step 2/5. Catalyzes the hydrolysis of N(2)-succinylarginine into N(2)-succinylornithine, ammonia and CO(2). This is N-succinylarginine dihydrolase from Shewanella sp. (strain ANA-3).